The primary structure comprises 476 residues: Arginine biosynthesis bifunctional protein ArgJ, mitochondrial (476 aa).

Positions 193, 219, 237, 337, 471, and 476 each coordinate substrate. Thr237 acts as the Nucleophile in catalysis.

It belongs to the ArgJ family. In terms of assembly, heterodimer of an alpha and a beta chain. In terms of processing, the alpha and beta chains are autoproteolytically processed from a single precursor protein within the mitochondrion.

The protein resides in the mitochondrion matrix. The catalysed reaction is N(2)-acetyl-L-ornithine + L-glutamate = N-acetyl-L-glutamate + L-ornithine. It carries out the reaction L-glutamate + acetyl-CoA = N-acetyl-L-glutamate + CoA + H(+). The protein operates within amino-acid biosynthesis; L-arginine biosynthesis; L-ornithine and N-acetyl-L-glutamate from L-glutamate and N(2)-acetyl-L-ornithine (cyclic): step 1/1. It participates in amino-acid biosynthesis; L-arginine biosynthesis; N(2)-acetyl-L-ornithine from L-glutamate: step 1/4. Its function is as follows. Catalyzes two activities which are involved in the cyclic version of arginine biosynthesis: the synthesis of acetylglutamate from glutamate and acetyl-CoA, and of ornithine by transacetylation between acetylornithine and glutamate. The protein is Arginine biosynthesis bifunctional protein ArgJ, mitochondrial of Cryptococcus neoformans var. neoformans serotype D (strain JEC21 / ATCC MYA-565) (Filobasidiella neoformans).